A 249-amino-acid chain; its full sequence is uncharacterized protein (249 aa).

This is an uncharacterized protein from Caenorhabditis elegans.